Here is a 41-residue protein sequence, read N- to C-terminus: Large ribosomal subunit protein bL36 (41 aa).

The protein belongs to the bacterial ribosomal protein bL36 family.

This chain is Large ribosomal subunit protein bL36, found in Rickettsia canadensis (strain McKiel).